Consider the following 446-residue polypeptide: MTGDRRLFLVGLSHKSAPIDVRERVALTGDALKAALCELKAMEGVTEALVVSTCNRVEVFVHSDRPDAARRFFTERSPAAADHLYAKDGVEAVRHLFRVASSLDSMVVGEQQILGQVKEAYGLASAASAAGSYFSRLCNRAFATAKRVRTETEIGRGATSMSQVAVELVEKIFGRLEGRAILLVGAGKMGALSAKALAVLGADRILVTNRSPERGLALAAQVSGSYRGWEELQRLLGEADVVIVSTGAPTYVVTRESMHAAMKARRRRSICLIDLAVPRNVDPACAELSDVYAYDVDDMERVVATSKQARQGEAIRAEAIVEAEVMAFAKEREARAALPVLAQLRRHAERIARAEAERTLAQVGGKLDDKGRKSVEAMAQAIVNKLLHGPTSRLKEAASSGDSALPGAAAELFGIENETAGGERREGGAEGAAAAPGAGPVRSQGT.

Substrate contacts are provided by residues 53–56 (TCNR), Ser-105, 110–112 (EQQ), and Gln-116. The active-site Nucleophile is Cys-54. 185–190 (GAGKMG) serves as a coordination point for NADP(+). The interval 409 to 446 (AAELFGIENETAGGERREGGAEGAAAAPGAGPVRSQGT) is disordered. A compositionally biased stretch (low complexity) spans 431 to 440 (GAAAAPGAGP).

The protein belongs to the glutamyl-tRNA reductase family. Homodimer.

It catalyses the reaction (S)-4-amino-5-oxopentanoate + tRNA(Glu) + NADP(+) = L-glutamyl-tRNA(Glu) + NADPH + H(+). The protein operates within porphyrin-containing compound metabolism; protoporphyrin-IX biosynthesis; 5-aminolevulinate from L-glutamyl-tRNA(Glu): step 1/2. Its function is as follows. Catalyzes the NADPH-dependent reduction of glutamyl-tRNA(Glu) to glutamate 1-semialdehyde (GSA). The polypeptide is Glutamyl-tRNA reductase 2 (Anaeromyxobacter dehalogenans (strain 2CP-C)).